Reading from the N-terminus, the 545-residue chain is MDFKRLTAFFAIALVIMIGWEKMFPTPKPVPAPQQTAQQQAVTASAEAALAPATPITVTTDTVQAVIDEKSGDLRRLTLLKYKATGDENKPFILFGDGKEYTYVAQSELLDAQGNNILKGIGFSAPKKQYSLEGDKVEVRLSAPETRGLKIDKVYTFTKGSYLVNVRFDIANGSGQTANLSADYRIVRDHSEPEGQGYFTHSYVGPVVYTPEGNFQKVSFSDLDDDAKSGKSEAEYIRKTPTGWLGMIEHHFMSTWILQPKGGQSVCAAGDCRIDIKRRNDKLYSTSVSVPLAAIQNGAKSEASINLYAGPQTTSVIANIADNLQLAKDYGKVHWFASPLFWLLNQLHNIIGNWGWAIIVLTIIVKAVLYPLTNASYRSMAKMRAAAPKLQAIKEKYGDDRMAQQQAMMQLYTDEKINPLGGCLPMLLQIPVFIGLYWALFASVELRQAPWLGWITDLSRADPYYILPIIMAATMFAQTYLNPPPTDPMQAKMMKIMPLVFSVMFFFFPAGLVLYWVINNLLTIAQQWHINRSIEKQRAQGEVVS.

Transmembrane regions (helical) follow at residues 350 to 370 (IIGN…AVLY), 424 to 444 (LPML…FASV), 461 to 481 (ADPY…QTYL), and 498 to 518 (PLVF…YWVI).

It belongs to the OXA1/ALB3/YidC family. Type 1 subfamily. Interacts with the Sec translocase complex via SecD. Specifically interacts with transmembrane segments of nascent integral membrane proteins during membrane integration.

Its subcellular location is the cell inner membrane. In terms of biological role, required for the insertion and/or proper folding and/or complex formation of integral membrane proteins into the membrane. Involved in integration of membrane proteins that insert both dependently and independently of the Sec translocase complex, as well as at least some lipoproteins. Aids folding of multispanning membrane proteins. The polypeptide is Membrane protein insertase YidC (Neisseria meningitidis serogroup A / serotype 4A (strain DSM 15465 / Z2491)).